Here is a 357-residue protein sequence, read N- to C-terminus: Mannonate dehydratase (357 aa).

It belongs to the mannonate dehydratase family. The cofactor is Fe(2+). Requires Mn(2+) as cofactor.

The enzyme catalyses D-mannonate = 2-dehydro-3-deoxy-D-gluconate + H2O. Its pathway is carbohydrate metabolism; pentose and glucuronate interconversion. In terms of biological role, catalyzes the dehydration of D-mannonate. The chain is Mannonate dehydratase from Sorangium cellulosum (strain So ce56) (Polyangium cellulosum (strain So ce56)).